The chain runs to 99 residues: PqqA binding protein (99 aa).

Belongs to the PqqD family. As to quaternary structure, monomer. Interacts with PqqE.

Its pathway is cofactor biosynthesis; pyrroloquinoline quinone biosynthesis. In terms of biological role, functions as a PqqA binding protein and presents PqqA to PqqE, in the pyrroloquinoline quinone (PQQ) biosynthetic pathway. This Acinetobacter baylyi (strain ATCC 33305 / BD413 / ADP1) protein is PqqA binding protein.